The primary structure comprises 283 residues: Acetylglutamate kinase (283 aa).

Substrate contacts are provided by residues 63 to 64 (GG), Arg-85, and Asn-178.

This sequence belongs to the acetylglutamate kinase family. ArgB subfamily.

The protein localises to the cytoplasm. The catalysed reaction is N-acetyl-L-glutamate + ATP = N-acetyl-L-glutamyl 5-phosphate + ADP. It participates in amino-acid biosynthesis; L-arginine biosynthesis; N(2)-acetyl-L-ornithine from L-glutamate: step 2/4. Its function is as follows. Catalyzes the ATP-dependent phosphorylation of N-acetyl-L-glutamate. This chain is Acetylglutamate kinase, found in Prochlorococcus marinus (strain MIT 9215).